A 97-amino-acid polypeptide reads, in one-letter code: Large ribosomal subunit protein bL28 (97 aa).

It belongs to the bacterial ribosomal protein bL28 family.

The sequence is that of Large ribosomal subunit protein bL28 from Rickettsia bellii (strain OSU 85-389).